The sequence spans 281 residues: 4-deoxy-L-threo-5-hexosulose-uronate ketol-isomerase (281 aa).

The Zn(2+) site is built by H198, H200, E205, and H248.

This sequence belongs to the KduI family. The cofactor is Zn(2+).

It catalyses the reaction 5-dehydro-4-deoxy-D-glucuronate = 3-deoxy-D-glycero-2,5-hexodiulosonate. Its pathway is glycan metabolism; pectin degradation; 2-dehydro-3-deoxy-D-gluconate from pectin: step 4/5. In terms of biological role, catalyzes the isomerization of 5-dehydro-4-deoxy-D-glucuronate to 3-deoxy-D-glycero-2,5-hexodiulosonate. This chain is 4-deoxy-L-threo-5-hexosulose-uronate ketol-isomerase, found in Lacticaseibacillus paracasei (strain ATCC 334 / BCRC 17002 / CCUG 31169 / CIP 107868 / KCTC 3260 / NRRL B-441) (Lactobacillus paracasei).